We begin with the raw amino-acid sequence, 372 residues long: Lipoyl synthase, mitochondrial (372 aa).

The [4Fe-4S] cluster site is built by Cys-106, Cys-111, Cys-117, Cys-137, Cys-141, Cys-144, and Ser-352. A Radical SAM core domain is found at 122–341; it reads EYGTATATIM…EKAGNELGFL (220 aa).

The protein belongs to the radical SAM superfamily. Lipoyl synthase family. Requires [4Fe-4S] cluster as cofactor.

It localises to the mitochondrion. It carries out the reaction [[Fe-S] cluster scaffold protein carrying a second [4Fe-4S](2+) cluster] + N(6)-octanoyl-L-lysyl-[protein] + 2 oxidized [2Fe-2S]-[ferredoxin] + 2 S-adenosyl-L-methionine + 4 H(+) = [[Fe-S] cluster scaffold protein] + N(6)-[(R)-dihydrolipoyl]-L-lysyl-[protein] + 4 Fe(3+) + 2 hydrogen sulfide + 2 5'-deoxyadenosine + 2 L-methionine + 2 reduced [2Fe-2S]-[ferredoxin]. It functions in the pathway protein modification; protein lipoylation via endogenous pathway; protein N(6)-(lipoyl)lysine from octanoyl-[acyl-carrier-protein]: step 2/2. Functionally, catalyzes the radical-mediated insertion of two sulfur atoms into the C-6 and C-8 positions of the octanoyl moiety bound to the lipoyl domains of lipoate-dependent enzymes, thereby converting the octanoylated domains into lipoylated derivatives. This chain is Lipoyl synthase, mitochondrial (lias), found in Xenopus laevis (African clawed frog).